Reading from the N-terminus, the 351-residue chain is Uroporphyrinogen decarboxylase (351 aa).

Substrate is bound by residues 25–29, Asp-74, Tyr-151, Ser-206, and His-325; that span reads RQAGR.

Belongs to the uroporphyrinogen decarboxylase family. Homodimer.

Its subcellular location is the cytoplasm. The catalysed reaction is uroporphyrinogen III + 4 H(+) = coproporphyrinogen III + 4 CO2. It functions in the pathway porphyrin-containing compound metabolism; protoporphyrin-IX biosynthesis; coproporphyrinogen-III from 5-aminolevulinate: step 4/4. Functionally, catalyzes the decarboxylation of four acetate groups of uroporphyrinogen-III to yield coproporphyrinogen-III. This is Uroporphyrinogen decarboxylase from Chlorobium chlorochromatii (strain CaD3).